Reading from the N-terminus, the 526-residue chain is MALLTLFNQIWQEGQLQSSTSSFNIFLVPILCLSIFILFSLTRSSSPSEKNRKLKLPPSPPRLPWIGNLHQLGSFPHRSLRALSKKYGDVMFMHFGKVPTLIVSSAEMAKDVMKTQDIVFCSRPQTTAPSILFYDGHDIAFAPYGEYWRQVRRICVLELLSLKRVHQFQYARVEEVAELVSKIRKASASANGAPINLGELLVSTSNNIICRCILGQKFEDKEDNWFGETTKELMTQVMSFSFGDFFPSLKWIDRARGYLAYLKSIWLEFDKFFDKLIDEHKAAQKEGKPRKKDIVDILLDVQNDGSLDFELTTSNVKAILQDMFVGGSDTSWTAAIWLMSELSQNPRVMKKVQEEVRRVAGKRGYVEESDINEMKYLTCVIKENLRLHPPAPLLLPREAMSDVKLGGFDIPAKTQVFVNAYAVQRDPKVWDKPDEFMPERFEENNVGFVGQDFELIPFGAGRRVCPGLAFGVASAQYVLANMLYWFDWKLPSGGSKLAETLDMSEVYGLTVHKKSPLYLVPTPYSP.

A helical membrane pass occupies residues 22-42; it reads SFNIFLVPILCLSIFILFSLT. Cysteine 465 contacts heme.

This sequence belongs to the cytochrome P450 family. It depends on heme as a cofactor. As to expression, expressed in seedlings and leaves.

Its subcellular location is the membrane. The enzyme catalyses (E)-phenylacetaldehyde oxime + reduced [NADPH--hemoprotein reductase] + O2 = (R)-mandelonitrile + oxidized [NADPH--hemoprotein reductase] + 2 H2O + H(+). It catalyses the reaction phenylacetonitrile + reduced [NADPH--hemoprotein reductase] + O2 = (R)-mandelonitrile + oxidized [NADPH--hemoprotein reductase] + H2O + H(+). In terms of biological role, involved in L-phenylalanine-derived cyanogenic glycoside biosynthesis, including prunasin and amygdalin defensive agents. Catalyzes the conversion of phenylacetaldoxime (PAOx) and phenylacetonitrile (PAN) into mandelonitrile (MAN). To a lower extent, can convert various aromatic aldoximes and nitriles; mediates the transformation of 4-hydroxyphenylacetaldoxime, 4-hydroxyphenylacetonitrile, indole-3-acetal-doxime and indole-3-acetonitrile into the corresponding hydroxynitriles, but cannot use the aliphatic compounds 2-methylpropanaloxime and 2-methylpropanenitrile as substrates. In Prunus mume (Japanese apricot), this protein is Phenylacetaldehyde oxime monooxygenase CYP71AN24.